The chain runs to 447 residues: Phosphoglucosamine mutase (447 aa).

Ser-108 (phosphoserine intermediate) is an active-site residue. Residues Ser-108, Asp-247, Asp-249, and Asp-251 each coordinate Mg(2+). Residue Ser-108 is modified to Phosphoserine.

The protein belongs to the phosphohexose mutase family. Mg(2+) serves as cofactor. Activated by phosphorylation.

The catalysed reaction is alpha-D-glucosamine 1-phosphate = D-glucosamine 6-phosphate. In terms of biological role, catalyzes the conversion of glucosamine-6-phosphate to glucosamine-1-phosphate. In Bordetella petrii (strain ATCC BAA-461 / DSM 12804 / CCUG 43448), this protein is Phosphoglucosamine mutase.